Consider the following 255-residue polypeptide: Thiazole synthase (255 aa).

Lysine 96 serves as the catalytic Schiff-base intermediate with DXP. 1-deoxy-D-xylulose 5-phosphate contacts are provided by residues glycine 157, 183–184 (AG), and 205–206 (NT).

This sequence belongs to the ThiG family. Homotetramer. Forms heterodimers with either ThiH or ThiS.

It is found in the cytoplasm. The catalysed reaction is [ThiS sulfur-carrier protein]-C-terminal-Gly-aminoethanethioate + 2-iminoacetate + 1-deoxy-D-xylulose 5-phosphate = [ThiS sulfur-carrier protein]-C-terminal Gly-Gly + 2-[(2R,5Z)-2-carboxy-4-methylthiazol-5(2H)-ylidene]ethyl phosphate + 2 H2O + H(+). It participates in cofactor biosynthesis; thiamine diphosphate biosynthesis. Functionally, catalyzes the rearrangement of 1-deoxy-D-xylulose 5-phosphate (DXP) to produce the thiazole phosphate moiety of thiamine. Sulfur is provided by the thiocarboxylate moiety of the carrier protein ThiS. In vitro, sulfur can be provided by H(2)S. In Staphylococcus saprophyticus subsp. saprophyticus (strain ATCC 15305 / DSM 20229 / NCIMB 8711 / NCTC 7292 / S-41), this protein is Thiazole synthase.